The primary structure comprises 451 residues: CBL-interacting protein kinase 10 (451 aa).

Positions 13 to 267 constitute a Protein kinase domain; sequence YEIGKLLGQG…VSEIMEDPWF (255 aa). ATP contacts are provided by residues 19 to 27 and Lys-42; that span reads LGQGSFAKV. Asp-135 serves as the catalytic Proton acceptor. Residues 153–182 form an activation loop region; the sequence is DFGLSALAECKRQDGLLHTTCGTPAYVAPE. The NAF domain maps to 304 to 336; it reads INEGKQEAENLTSLNAFDIISLSSGFDLSAMFE. The segment at 341 to 370 is PPI; that stretch reads KEESKFTSTNTATTITKKLEDVAKNLRLKF.

The protein belongs to the protein kinase superfamily. CAMK Ser/Thr protein kinase family. SNF1 subfamily. Mn(2+) serves as cofactor.

The enzyme catalyses L-seryl-[protein] + ATP = O-phospho-L-seryl-[protein] + ADP + H(+). The catalysed reaction is L-threonyl-[protein] + ATP = O-phospho-L-threonyl-[protein] + ADP + H(+). Functionally, CIPK serine-threonine protein kinases interact with CBL proteins. Binding of a CBL protein to the regulatory NAF domain of CIPK protein lead to the activation of the kinase in a calcium-dependent manner. The protein is CBL-interacting protein kinase 10 (CIPK10) of Oryza sativa subsp. japonica (Rice).